The primary structure comprises 356 residues: Trans-enoyl reductase pgmF (356 aa).

Residues 57 to 60, 175 to 178, 198 to 201, tyrosine 216, 261 to 262, and 342 to 343 each bind NADP(+); these read VDFK, SGGC, STPN, VG, and AK.

Belongs to the zinc-containing alcohol dehydrogenase family.

Its function is as follows. FAD-linked oxidoreductase; part of the gene cluster that mediates the biosynthesis of pleosporalin A, ascomycone A, as well as a third cryptic naphthoquinone derived pigment, all responsible for the coloration of conidia. The pathway begins with the biosynthesis of the cyclized heptaketide 3-acetonyl-1,6,8-trihydroxy-2-naphthaldehyde by the NR-PKS pgmA. The C-6 hydroxyl group is further methylated by the O-methyltransferase pgmB to yield fusarubinaldehyde which is in turn oxidized by the cytochrome P450 monooxygenase pgmC at C-9. The C-1 hydroxyl group is then methylated spontaneously. Although pgmE, pgmD and pgmH are essential for the production of pleosporalin A, it is not the case for the 2 other final products and it remains difficult to assign a specific function to each enzyme. PgmF and pgmG seem not to be involved in pigment biosynthesis although they were regulated by the cluster-specific transcription factor pgmR. In Aspergillus terreus, this protein is Trans-enoyl reductase pgmF.